A 129-amino-acid chain; its full sequence is Fluoride-specific ion channel FluC (129 aa).

4 helical membrane-spanning segments follow: residues 1–21 (MLMKQVSAFLLVGIGGFLGSA), 35–55 (GGLPLATFSVNIIGCFFIGFI), 71–91 (LFLVTGFCGGFTTFSSYIFEN), and 105–125 (AYLAGSVIGGFVALYSGTFFA). Na(+)-binding residues include glycine 79 and threonine 82.

The protein belongs to the fluoride channel Fluc/FEX (TC 1.A.43) family.

Its subcellular location is the cell inner membrane. The catalysed reaction is fluoride(in) = fluoride(out). Its activity is regulated as follows. Na(+) is not transported, but it plays an essential structural role and its presence is essential for fluoride channel function. Functionally, fluoride-specific ion channel. Important for reducing fluoride concentration in the cell, thus reducing its toxicity. This chain is Fluoride-specific ion channel FluC, found in Chlorobium phaeobacteroides (strain DSM 266 / SMG 266 / 2430).